Reading from the N-terminus, the 644-residue chain is Acetolactate synthase 1, chloroplastic (644 aa).

The transit peptide at 1–43 directs the protein to the chloroplast; that stretch reads MATTAAAAAAALSAAATAKTGRKNHQRHHVLPARGRVGAAAVR. Residues 47–67 are disordered; that stretch reads VSPVTPPSPAPPATPLRPWGP. The span at 50–61 shows a compositional bias: pro residues; that stretch reads VTPPSPAPPATP. Residue Glu-118 coordinates thiamine diphosphate. Residues Cys-138 and Cys-284 are joined by a disulfide bond. FAD is bound by residues Arg-220, 326–347, and 369–388; these read HGTV…FGVR and DIDP…ICAD. The thiamine pyrophosphate binding stretch occupies residues 461-541; sequence QHQMWAAQYY…VKVMVLNNQH (81 aa). The Mg(2+) site is built by Asp-512 and Asn-539.

It belongs to the TPP enzyme family. The cofactor is Mg(2+). Thiamine diphosphate serves as cofactor.

The protein localises to the plastid. It is found in the chloroplast. It catalyses the reaction 2 pyruvate + H(+) = (2S)-2-acetolactate + CO2. It participates in amino-acid biosynthesis; L-isoleucine biosynthesis; L-isoleucine from 2-oxobutanoate: step 1/4. Its pathway is amino-acid biosynthesis; L-valine biosynthesis; L-valine from pyruvate: step 1/4. This Oryza sativa subsp. japonica (Rice) protein is Acetolactate synthase 1, chloroplastic (ALS1).